The chain runs to 366 residues: 5-amino-6-(D-ribitylamino)uracil--L-tyrosine 4-hydroxyphenyl transferase (366 aa).

The region spanning 51–290 is the Radical SAM core domain; that stretch reads RCGNAITWVK…MIAISRLFLD (240 aa). [4Fe-4S] cluster-binding residues include Cys70, Cys74, and Cys77.

It belongs to the radical SAM superfamily. CofH family. Consists of two subunits, CofG and CofH. Requires [4Fe-4S] cluster as cofactor.

It catalyses the reaction 5-amino-6-(D-ribitylamino)uracil + L-tyrosine + S-adenosyl-L-methionine = 5-amino-5-(4-hydroxybenzyl)-6-(D-ribitylimino)-5,6-dihydrouracil + 2-iminoacetate + 5'-deoxyadenosine + L-methionine + H(+). Its pathway is cofactor biosynthesis; coenzyme F0 biosynthesis. Functionally, catalyzes the radical-mediated synthesis of 5-amino-5-(4-hydroxybenzyl)-6-(D-ribitylimino)-5,6-dihydrouracil from 5-amino-6-(D-ribitylamino)uracil and L-tyrosine. The polypeptide is 5-amino-6-(D-ribitylamino)uracil--L-tyrosine 4-hydroxyphenyl transferase (Methanospirillum hungatei JF-1 (strain ATCC 27890 / DSM 864 / NBRC 100397 / JF-1)).